Here is a 239-residue protein sequence, read N- to C-terminus: Purine nucleoside phosphorylase DeoD-type (239 aa).

His-5 serves as a coordination point for a purine D-ribonucleoside. Phosphate is bound by residues Gly-21 and Arg-25. Lys-27 bears the N6-acetyllysine mark. Phosphate-binding positions include Arg-44 and Arg-88–Ser-91. A purine D-ribonucleoside contacts are provided by residues Glu-180–Glu-182 and Ser-204–Asp-205. Asp-205 functions as the Proton donor in the catalytic mechanism.

This sequence belongs to the PNP/UDP phosphorylase family. Homohexamer; trimer of homodimers.

The catalysed reaction is a purine D-ribonucleoside + phosphate = a purine nucleobase + alpha-D-ribose 1-phosphate. The enzyme catalyses a purine 2'-deoxy-D-ribonucleoside + phosphate = a purine nucleobase + 2-deoxy-alpha-D-ribose 1-phosphate. Its function is as follows. Catalyzes the reversible phosphorolytic breakdown of the N-glycosidic bond in the beta-(deoxy)ribonucleoside molecules, with the formation of the corresponding free purine bases and pentose-1-phosphate. This Escherichia coli O81 (strain ED1a) protein is Purine nucleoside phosphorylase DeoD-type.